The chain runs to 1579 residues: MAP kinase kinase kinase SSK2 (1579 aa).

Positions 1-70 are disordered; the sequence is MSHSDYFNYK…HSTQYFRSPN (70 aa). The span at 21–44 shows a compositional bias: low complexity; sequence SSKMRQSSSSSSSRLRSESLGRNS. The span at 45-67 shows a compositional bias: polar residues; the sequence is NTTQARVASSPISPGLHSTQYFR. Residues Ser57, Ser62, Ser78, and Ser118 each carry the phosphoserine modification. 2 disordered regions span residues 97–155 and 190–243; these read FFHQ…ESEI and SIMS…GSTT. Over residues 104–118 the composition is skewed to low complexity; that stretch reads SGSSSSSARSSRRPS. The segment covering 127-139 has biased composition (polar residues); the sequence is NPQQSLPKLSTQP. Basic and acidic residues predominate over residues 144 to 155; the sequence is KKVEASKTESEI. Ser290 carries the post-translational modification Phosphoserine. The Protein kinase domain occupies 1266 to 1558; it reads WQKRNFIGGG…AVELLMDPWI (293 aa). Residues 1272 to 1280 and Lys1295 each bind ATP; that span reads IGGGTFGRV. Asp1390 (proton acceptor) is an active-site residue. Ser1424 is modified (phosphoserine).

This sequence belongs to the protein kinase superfamily. STE Ser/Thr protein kinase family. MAP kinase kinase kinase subfamily. In terms of assembly, interacts with by SSK1.

It catalyses the reaction L-seryl-[protein] + ATP = O-phospho-L-seryl-[protein] + ADP + H(+). The catalysed reaction is L-threonyl-[protein] + ATP = O-phospho-L-threonyl-[protein] + ADP + H(+). Its function is as follows. Kinase involved in a signal transduction pathway that is activated by changes in the osmolarity of the extracellular environment. Activates the PBS2 MAP kinase kinase by phosphorylation. The protein is MAP kinase kinase kinase SSK2 (SSK2) of Saccharomyces cerevisiae (strain ATCC 204508 / S288c) (Baker's yeast).